A 212-amino-acid polypeptide reads, in one-letter code: MSTIELNKRQEHILQIVKENGPITGEHIAEKLNLTRATLRPDLAILTMSGFLEARPRVGYFYTGKTGTQLLADKLKKLQVKDFQSIPVVIHENVSVYDAICTMFLEDVGTLFVVDRDAVLVGVLSRKDLLRASIGQQELTSVPVHIIMTRMPNITVCRREDYVMDIAKHLIEKQIDALPVIKDTDKGFEVIGRVTKTNMTKILVSLSENEIL.

In terms of domain architecture, HTH deoR-type spans 6-70 (LNKRQEHILQ…FYTGKTGTQL (65 aa)). The H-T-H motif DNA-binding region spans 23–42 (ITGEHIAEKLNLTRATLRPD). CBS domains are found at residues 83-139 (FQSI…QQEL) and 148-211 (MTRM…ENEI).

Functionally, transcription repressor that binds to the promoter of gapB and pckA genes, preventing their expression. Acts as a regulator for catabolite repression of gluconeogenic genes. The polypeptide is Transcriptional repressor CcpN (ccpN) (Bacillus subtilis (strain 168)).